The sequence spans 357 residues: CD4+ T-cell-stimulating antigen (357 aa).

The N-terminal stretch at 1–22 (MKKRTFALALSMIIASGVVLGA) is a signal peptide. Cys-23 is lipidated: N-palmitoyl cysteine. Residue Cys-23 is the site of S-diacylglycerol cysteine attachment.

Belongs to the BMP lipoprotein family.

Its subcellular location is the cell membrane. This is CD4+ T-cell-stimulating antigen (tcsA) from Listeria innocua serovar 6a (strain ATCC BAA-680 / CLIP 11262).